Consider the following 111-residue polypeptide: Phosphoribosyl-AMP cyclohydrolase (111 aa).

Mg(2+) is bound at residue Asp80. Residue Cys81 coordinates Zn(2+). 2 residues coordinate Mg(2+): Asp82 and Asp84. Zn(2+)-binding residues include Cys97 and Cys104.

Belongs to the PRA-CH family. As to quaternary structure, homodimer. Requires Mg(2+) as cofactor. Zn(2+) is required as a cofactor.

The protein resides in the cytoplasm. It catalyses the reaction 1-(5-phospho-beta-D-ribosyl)-5'-AMP + H2O = 1-(5-phospho-beta-D-ribosyl)-5-[(5-phospho-beta-D-ribosylamino)methylideneamino]imidazole-4-carboxamide. The protein operates within amino-acid biosynthesis; L-histidine biosynthesis; L-histidine from 5-phospho-alpha-D-ribose 1-diphosphate: step 3/9. In terms of biological role, catalyzes the hydrolysis of the adenine ring of phosphoribosyl-AMP. The chain is Phosphoribosyl-AMP cyclohydrolase from Mycobacterium marinum (strain ATCC BAA-535 / M).